The following is a 370-amino-acid chain: Fe(2+) transport protein 2 (370 aa).

A signal peptide spans 1-25 (MMMSSSQTPVRIAFVFLVILAATDA). Over 26 to 55 (HSDHRTPPPACGGAAVGGECHSVARALRLK) the chain is Extracellular. Residues 56 to 76 (LIAIPAILAASVAGVCLPLFA) traverse the membrane as a helical segment. Over 77–85 (RSVPALRPD) the chain is Cytoplasmic. A helical membrane pass occupies residues 86–106 (GGLFAVVKAFASGVILGTGYM). The Extracellular segment spans residues 107-130 (HVLPDSFNDLTSPCLPRKPWSEFP). A helical membrane pass occupies residues 131–151 (FAAFVAMLAAVFTLMVDSLML). The Cytoplasmic segment spans residues 152–215 (TFHTRGSKGR…TTKAQLLRNR (64 aa)). A helical transmembrane segment spans residues 216–236 (VIVQVLEMGIVVHSVVIGLGM). At 237–247 (GASQNVCTIRP) the chain is on the extracellular side. The helical transmembrane segment at 248–268 (LVAALCFHQMFEGMGLGGCIL) threads the bilayer. Topologically, residues 269 to 278 (QAGYGGRTRS) are cytoplasmic. A helical membrane pass occupies residues 279-299 (ALVFFFSTTTPFGIALGLALT). Over 300-309 (RVYSDSSPTA) the chain is Extracellular. The chain crosses the membrane as a helical span at residues 310–330 (LVVVGLLNAASAGLLHYMALV). At 331-349 (ELLAADFMGPKLQGNVRLQ) the chain is on the cytoplasmic side. Residues 350–370 (LAASLAILLGAGGMSVMAKWA) traverse the membrane as a helical segment.

Belongs to the ZIP transporter (TC 2.A.5) family.

The protein resides in the cell membrane. Iron transporter that may play a role in the uptake of iron from the rhizosphere across the plasma membrane in the root epidermal layer. The protein is Fe(2+) transport protein 2 (IRT2) of Oryza sativa subsp. japonica (Rice).